Reading from the N-terminus, the 421-residue chain is Testin (421 aa).

In terms of domain architecture, PET spans 92–199 (MILTNPVAAK…GDVKLPQEMD (108 aa)). LIM zinc-binding domains are found at residues 234 to 297 (YSCY…CDSE), 299 to 359 (PRCA…NHAV), and 362 to 421 (QGCH…KMMS).

The protein belongs to the prickle / espinas / testin family. As to quaternary structure, interacts via LIM domain 1 with ZYX. Interacts (via LIM domain 3) with ENAH and VASP. Interacts with ALKBH4, talin, actin, alpha-actinin, GRIP1 and PXN. Interacts (via LIM domain 2) with ACTL7A (via N-terminus). Heterodimer with ACTL7A; the heterodimer interacts with ENAH to form a heterotrimer.

Its subcellular location is the cytoplasm. The protein resides in the cell junction. The protein localises to the focal adhesion. Functionally, scaffold protein that may play a role in cell adhesion, cell spreading and in the reorganization of the actin cytoskeleton. Plays a role in the regulation of cell proliferation. May act as a tumor suppressor. This chain is Testin (TES), found in Loxodonta africana (African elephant).